Here is a 179-residue protein sequence, read N- to C-terminus: Large ribosomal subunit protein uL6 (179 aa).

Belongs to the universal ribosomal protein uL6 family. In terms of assembly, part of the 50S ribosomal subunit.

Its function is as follows. This protein binds to the 23S rRNA, and is important in its secondary structure. It is located near the subunit interface in the base of the L7/L12 stalk, and near the tRNA binding site of the peptidyltransferase center. This chain is Large ribosomal subunit protein uL6, found in Pseudomonas savastanoi pv. phaseolicola (strain 1448A / Race 6) (Pseudomonas syringae pv. phaseolicola (strain 1448A / Race 6)).